The sequence spans 203 residues: Cilia- and flagella-associated protein 20 (203 aa).

It belongs to the CFAP20 family.

The protein resides in the nucleus. It localises to the cytoplasm. It is found in the cytoskeleton. The protein localises to the microtubule organizing center. Its subcellular location is the centrosome. The protein resides in the centriole. It localises to the cilium basal body. It is found in the cilium axoneme. Cilium- and flagellum-specific protein that plays a role in axonemal structure organization and motility. Microtubule inner protein (MIP) part of the dynein-decorated doublet microtubules (DMTs) in cilia axoneme, which is required for motile cilia beating. Involved in the regulation of the size and morphology of cilia. Required for axonemal microtubules polyglutamylation. In Caenorhabditis elegans, this protein is Cilia- and flagella-associated protein 20.